The primary structure comprises 885 residues: Cadherin-related family member 3 (885 aa).

Residues 1–19 (MQEAIILLALLGAMSGGEA) form the signal peptide. The Extracellular portion of the chain corresponds to 20 to 713 (LHLILLPATG…VYSPSAWYVP (694 aa)). Cadherin domains lie at 23-132 (ILLP…PPQF), 136-236 (LAEG…VPRF), 237-344 (TSPT…NPAT), 346-466 (QKFT…RPSY), 462-566 (DRPS…KPIC), and 567-695 (TPNS…RPRV). Asn-186 and Asn-257 each carry an N-linked (GlcNAc...) asparagine glycan. N-linked (GlcNAc...) asparagine glycosylation is present at Asn-624. The helical transmembrane segment at 714–734 (FVITLGSILLLGLLVYLVVLL) threads the bilayer. Residues 735-885 (AKAIHRHCPC…RAYPKPHPGK (151 aa)) are Cytoplasmic-facing. The interval 808-885 (MPKWKESSHQ…RAYPKPHPGK (78 aa)) is disordered.

In terms of assembly, (Microbial infection) Interacts (via N-terminus) with human rhinovirus C capsid proteins VP1, VP2 and VP3. In terms of tissue distribution, expressed in bronchial epithelium from adults and in fetal lung tissue.

Its subcellular location is the cell membrane. Cadherins are calcium-dependent cell adhesion proteins. They preferentially interact with themselves in a homophilic manner in connecting cells; cadherins may thus contribute to the sorting of heterogeneous cell types. Its function is as follows. (Microbial infection) Acts as a receptor for human rhinovirus C. The chain is Cadherin-related family member 3 (CDHR3) from Homo sapiens (Human).